The chain runs to 654 residues: tRNA 5-methylaminomethyl-2-thiouridine biosynthesis bifunctional protein MnmC (654 aa).

The tract at residues 1–236 (MSTLLQHAQI…KWEVMHGVYT (236 aa)) is tRNA (mnm(5)s(2)U34)-methyltransferase. An FAD-dependent cmnm(5)s(2)U34 oxidoreductase region spans residues 262–654 (IGAGLAGSAT…FALRRLIRGK (393 aa)).

In the N-terminal section; belongs to the methyltransferase superfamily. tRNA (mnm(5)s(2)U34)-methyltransferase family. It in the C-terminal section; belongs to the DAO family. The cofactor is FAD.

It localises to the cytoplasm. The enzyme catalyses 5-aminomethyl-2-thiouridine(34) in tRNA + S-adenosyl-L-methionine = 5-methylaminomethyl-2-thiouridine(34) in tRNA + S-adenosyl-L-homocysteine + H(+). Functionally, catalyzes the last two steps in the biosynthesis of 5-methylaminomethyl-2-thiouridine (mnm(5)s(2)U) at the wobble position (U34) in tRNA. Catalyzes the FAD-dependent demodification of cmnm(5)s(2)U34 to nm(5)s(2)U34, followed by the transfer of a methyl group from S-adenosyl-L-methionine to nm(5)s(2)U34, to form mnm(5)s(2)U34. This Pseudomonas entomophila (strain L48) protein is tRNA 5-methylaminomethyl-2-thiouridine biosynthesis bifunctional protein MnmC.